We begin with the raw amino-acid sequence, 383 residues long: L-lactate dehydrogenase (383 aa).

An FMN hydroxy acid dehydrogenase domain is found at 1-380 (MIISSGNDYR…NTDCLVQAIK (380 aa)). Tyrosine 24 is a substrate binding site. FMN-binding residues include serine 106 and glutamine 127. Tyrosine 129 provides a ligand contact to substrate. Threonine 155 serves as a coordination point for FMN. Arginine 164 lines the substrate pocket. Lysine 251 provides a ligand contact to FMN. The active-site Proton acceptor is histidine 275. Residue arginine 278 coordinates substrate. An FMN-binding site is contributed by 306 to 330 (DSGIRNGLDVVRMLALGADTVLLGR).

This sequence belongs to the FMN-dependent alpha-hydroxy acid dehydrogenase family. It depends on FMN as a cofactor.

It is found in the cell inner membrane. The catalysed reaction is (S)-lactate + A = pyruvate + AH2. Its function is as follows. Catalyzes the conversion of L-lactate to pyruvate. Is coupled to the respiratory chain. The sequence is that of L-lactate dehydrogenase from Acinetobacter baumannii (strain SDF).